We begin with the raw amino-acid sequence, 335 residues long: Transmembrane protein 120B (335 aa).

The stretch at 1-39 (MSLQKCQEEWGELEKEFQQLQETHKVYKQKLEELNGLQN) forms a coiled coil. The next 6 helical transmembrane spans lie at 100–122 (GLYLNLVLGNVNVTLLSNQAKFA), 130–150 (FKLYLTIILLLGAITCRFVLH), 157–177 (VFNFLLVWYYCTLTIRESILI), 193–213 (VSTFLSGVMLTWPDGLMYQIF), 268–288 (FLLPFLFFGHFWQLYNAITLF), and 300–320 (QVFVLALTFLLLFLGNFLTTL).

The protein belongs to the TMEM120 family.

Its subcellular location is the nucleus inner membrane. Necessary for efficient adipogenesis. Does not show ion channel activity. This Xenopus tropicalis (Western clawed frog) protein is Transmembrane protein 120B (tmem120b).